The chain runs to 264 residues: Acyl-[acyl-carrier-protein]--UDP-N-acetylglucosamine O-acyltransferase (264 aa).

It belongs to the transferase hexapeptide repeat family. LpxA subfamily. In terms of assembly, homotrimer.

The protein resides in the cytoplasm. It carries out the reaction a (3R)-hydroxyacyl-[ACP] + UDP-N-acetyl-alpha-D-glucosamine = a UDP-3-O-[(3R)-3-hydroxyacyl]-N-acetyl-alpha-D-glucosamine + holo-[ACP]. It participates in glycolipid biosynthesis; lipid IV(A) biosynthesis; lipid IV(A) from (3R)-3-hydroxytetradecanoyl-[acyl-carrier-protein] and UDP-N-acetyl-alpha-D-glucosamine: step 1/6. Involved in the biosynthesis of lipid A, a phosphorylated glycolipid that anchors the lipopolysaccharide to the outer membrane of the cell. The sequence is that of Acyl-[acyl-carrier-protein]--UDP-N-acetylglucosamine O-acyltransferase from Rickettsia africae (strain ESF-5).